We begin with the raw amino-acid sequence, 144 residues long: Hemoglobin embryonic subunit alpha (144 aa).

The Globin domain occupies 3 to 144; it reads SLSAKDKDVV…LALALAEKYR (142 aa). Histidine 61 provides a ligand contact to O2. Histidine 90 is a heme b binding site.

This sequence belongs to the globin family. Heterotetramer of two alpha chains and two beta chains. Red blood cells.

Its function is as follows. Involved in oxygen transport from gills to the various peripheral tissues. The protein is Hemoglobin embryonic subunit alpha of Oryzias latipes (Japanese rice fish).